Reading from the N-terminus, the 481-residue chain is Keratin, type I cytoskeletal 39 (481 aa).

The interval 1 to 25 (MDTKGSTVTISSSTPPQNCSGNTNV) is disordered. The interval 1–90 (MDTKGSTVTI…RCSDGINSHE (90 aa)) is head. An IF rod domain is found at 90–401 (EKETMQILNE…SLLESLDGRL (312 aa)). The tract at residues 91-125 (KETMQILNERLASYLEKVRMLEGENADLEDKIQEE) is coil 1A. Residues 126–136 (CSKTLPILCPD) are linker 1. Residues 137–237 (YLSYYTTIEQ…HEEEINSLQC (101 aa)) are coil 1B. Residues 238-253 (QLGDRINIEVTAAPSV) are linker 12. Residues 254–397 (DLNQILQKMR…ATYRSLLESL (144 aa)) are coil 2. The tract at residues 398–481 (DGRLPCNPCT…PCYITRPAKV (84 aa)) is tail.

This sequence belongs to the intermediate filament family. Heterotetramer of two type I and two type II keratins.

Its function is as follows. May play a role in late hair differentiation. The polypeptide is Keratin, type I cytoskeletal 39 (Krt39) (Rattus norvegicus (Rat)).